Reading from the N-terminus, the 306-residue chain is Glutaminase (306 aa).

Ser64, Asn115, Glu159, Asn166, Tyr190, Tyr242, and Val260 together coordinate substrate.

The protein belongs to the glutaminase family. As to quaternary structure, homotetramer.

It catalyses the reaction L-glutamine + H2O = L-glutamate + NH4(+). This is Glutaminase from Aeromonas hydrophila subsp. hydrophila (strain ATCC 7966 / DSM 30187 / BCRC 13018 / CCUG 14551 / JCM 1027 / KCTC 2358 / NCIMB 9240 / NCTC 8049).